Reading from the N-terminus, the 791-residue chain is Interleukin-17 receptor C (791 aa).

A signal peptide spans M1 to S20. The Extracellular portion of the chain corresponds to L21–R538. Residues N189 and N257 are each glycosylated (N-linked (GlcNAc...) asparagine). A disulfide bridge links C265 with C277. 4 N-linked (GlcNAc...) asparagine glycosylation sites follow: N284, N297, N324, and N334. 3 disulfides stabilise this stretch: C341/C391, C343/C359, and C400/C409. 3 N-linked (GlcNAc...) asparagine glycosylation sites follow: N420, N443, and N477. A disulfide bridge connects residues C439 and C453. 2 cysteine pairs are disulfide-bonded: C481/C488 and C515/C529. A helical transmembrane segment spans residues W539–L559. Over K560–T791 the chain is Cytoplasmic. The SEFIR domain occupies G583–G735. Positions A762 to T791 are disordered. The segment covering R777–T791 has biased composition (gly residues).

Homodimer; disulfide-linked. Heterodimer with IL17RA. Heterodimerization with IL17RA is independent of the cytoplasmic tail. Associates with non-glycosylated IL17RA constitutively. Binding of IL17A and IL17F induces association with glycosylated IL17RA. Forms complexes with 2:1 binding stoichiometry: two receptor chains for one interleukin molecule. IL17A homodimer preferentially drives the formation of IL17RA-IL17RC heterodimeric receptor complex, whereas IL17F homodimer forms predominantly complexes with IL17RC homodimer. IL17A-IL17F forms complexes with IL17RA-IL17RC, but with lower affinity when compared to IL17A homodimer. IL17RC chain cannot distinguish between IL17A and IL17F molecules, potentially enabling the formation of topologically distinct complexes. Interacts (through SEFIR domain and extended downstream region) with TRAF3IP2/ACT1 (phosphorylated). Expressed in prostate, skeletal muscle, kidney and placenta (at protein level). Expressed in brain, cartilage, colon, heart, intestine, kidney, liver, lung, muscle, placenta, and prostate. Also detected in thyroid, trachea and adrenal gland. Low expression in thymus and leukocytes.

Its subcellular location is the cell membrane. Its function is as follows. Receptor for IL17A and IL17F, major effector cytokines of innate and adaptive immune system involved in antimicrobial host defense and maintenance of tissue integrity. Receptor for IL17A and IL17F, major effector cytokines of innate and adaptive immune system involved in antimicrobial host defense and maintenance of tissue integrity. Receptor for IL17A and IL17F homodimers as part of a heterodimeric complex with IL17RA. Receptor for the heterodimer formed by IL17A and IL17B as part of a heterodimeric complex with IL17RA. Has also been shown to be the cognate receptor for IL17F and to bind IL17A with high affinity without the need for IL17RA. Upon binding of IL17F homodimer triggers downstream activation of TRAF6 and NF-kappa-B signaling pathway. Induces transcriptional activation of IL33, a potent cytokine that stimulates group 2 innate lymphoid cells and adaptive T-helper 2 cells involved in pulmonary allergic response to fungi. Promotes sympathetic innervation of peripheral organs by coordinating the communication between gamma-delta T cells and parenchymal cells. Stimulates sympathetic innervation of thermogenic adipose tissue by driving TGFB1 expression. Binding of IL17A-IL17F to IL17RA-IL17RC heterodimeric receptor complex triggers homotypic interaction of IL17RA and IL17RC chains with TRAF3IP2 adapter through SEFIR domains. This leads to downstream TRAF6-mediated activation of NF-kappa-B and MAPkinase pathways ultimately resulting in transcriptional activation of cytokines, chemokines, antimicrobial peptides and matrix metalloproteinases, with potential strong immune inflammation. Primarily induces neutrophil activation and recruitment at infection and inflammatory sites. Stimulates the production of antimicrobial beta-defensins DEFB1, DEFB103A, and DEFB104A by mucosal epithelial cells, limiting the entry of microbes through the epithelial barriers. Receptor for both IL17A and IL17F. Functionally, does not bind IL17A or IL17F. The protein is Interleukin-17 receptor C (IL17RC) of Homo sapiens (Human).